An 88-amino-acid chain; its full sequence is MRLFIALPVLIVVVAMALEGPAPAQAAPDLSSTLERLPDKLKEFGSTLEDKAREAIDHIKQKEILTKTRTWFSETFSKVKEKLKTTFA.

An N-terminal signal peptide occupies residues 1 to 26 (MRLFIALPVLIVVVAMALEGPAPAQA).

It belongs to the apolipoprotein C1 family.

It is found in the secreted. Its function is as follows. Inhibitor of lipoprotein binding to the low density lipoprotein (LDL) receptor, LDL receptor-related protein, and very low density lipoprotein (VLDL) receptor. Associates with high density lipoproteins (HDL) and the triacylglycerol-rich lipoproteins in the plasma and makes up about 10% of the protein of the VLDL and 2% of that of HDL. Appears to interfere directly with fatty acid uptake and is also the major plasma inhibitor of cholesteryl ester transfer protein (CETP). Modulates the interaction of APOE with beta-migrating VLDL and inhibits binding of beta-VLDL to the LDL receptor-related protein. Binds free fatty acids and reduces their intracellular esterification. The protein is Apolipoprotein C-I (Apoc1) of Grammomys surdaster (African woodland thicket rat).